The chain runs to 448 residues: Omega-6 fatty acid desaturase, chloroplastic (448 aa).

Residues 1–69 (MASRIADSLF…VKRRIGCIKA (69 aa)) constitute a chloroplast transit peptide. V70 carries the N-acetylvaline modification. Helical transmembrane passes span 124–144 (LKAL…LFMI) and 149–169 (WYLL…FFVI). The short motif at 171-175 (HDCAH) is the Histidine box-1 element. Residues 207-211 (HDRHH) carry the Histidine box-2 motif. Transmembrane regions (helical) follow at residues 282-302 (VFAF…ILGW) and 303-323 (VKFW…FTMV). A Histidine box-3 motif is present at residues 367 to 371 (HIPHH).

Belongs to the fatty acid desaturase type 1 family.

It is found in the plastid. The protein resides in the chloroplast inner membrane. It carries out the reaction a (9Z)-octadecenoyl-containing glycerolipid + 2 reduced [2Fe-2S]-[ferredoxin] + O2 + 2 H(+) = a (9Z,12Z)-octadecadienoyl-containing glycerolipid + 2 oxidized [2Fe-2S]-[ferredoxin] + 2 H2O. Its pathway is lipid metabolism; polyunsaturated fatty acid biosynthesis. Functionally, chloroplast omega-6 fatty acid desaturase introduces the second double bond in the biosynthesis of 16:3 and 18:3 fatty acids, important constituents of plant membranes. It is thought to use ferredoxin as an electron donor and to act on fatty acids esterified to galactolipids, sulfolipids and phosphatidylglycerol. The sequence is that of Omega-6 fatty acid desaturase, chloroplastic from Arabidopsis thaliana (Mouse-ear cress).